The chain runs to 322 residues: uncharacterized protein (322 aa).

8 consecutive transmembrane segments (helical) span residues 7 to 27, 54 to 74, 87 to 107, 128 to 148, 162 to 182, 209 to 229, 249 to 269, and 287 to 307; these read IQKI…IGAI, AFAL…LAMF, FVGF…LSGS, IAFC…ITFV, FLSV…YLLI, IGLT…LLPG, GIIS…LFLL, and VIYY…FELL.

This sequence to E.coli YbhN.

It is found in the cell membrane. This is an uncharacterized protein from Synechocystis sp. (strain ATCC 27184 / PCC 6803 / Kazusa).